Reading from the N-terminus, the 419-residue chain is Probable 3-isopropylmalate dehydratase large subunit (419 aa).

Residues Cys-299, Cys-359, and Cys-362 each coordinate [4Fe-4S] cluster.

Belongs to the aconitase/IPM isomerase family. LeuC type 2 subfamily. In terms of assembly, heterodimer of LeuC and LeuD. Requires [4Fe-4S] cluster as cofactor.

It carries out the reaction (2R,3S)-3-isopropylmalate = (2S)-2-isopropylmalate. It functions in the pathway amino-acid biosynthesis; L-leucine biosynthesis; L-leucine from 3-methyl-2-oxobutanoate: step 2/4. Functionally, catalyzes the isomerization between 2-isopropylmalate and 3-isopropylmalate, via the formation of 2-isopropylmaleate. The protein is Probable 3-isopropylmalate dehydratase large subunit of Methanothermobacter thermautotrophicus (strain ATCC 29096 / DSM 1053 / JCM 10044 / NBRC 100330 / Delta H) (Methanobacterium thermoautotrophicum).